Consider the following 101-residue polypeptide: CRISPR-associated endoribonuclease Cas2 (101 aa).

D8 is a Mg(2+) binding site.

The protein belongs to the CRISPR-associated endoribonuclease Cas2 protein family. In terms of assembly, homodimer, forms a heterotetramer with a Cas1 homodimer. Requires Mg(2+) as cofactor.

Its function is as follows. CRISPR (clustered regularly interspaced short palindromic repeat), is an adaptive immune system that provides protection against mobile genetic elements (viruses, transposable elements and conjugative plasmids). CRISPR clusters contain sequences complementary to antecedent mobile elements and target invading nucleic acids. CRISPR clusters are transcribed and processed into CRISPR RNA (crRNA). Functions as a ssRNA-specific endoribonuclease. Involved in the integration of spacer DNA into the CRISPR cassette. This Ligilactobacillus salivarius (strain UCC118) (Lactobacillus salivarius) protein is CRISPR-associated endoribonuclease Cas2.